A 167-amino-acid chain; its full sequence is Putative universal stress protein SSP1056 (167 aa).

The protein belongs to the universal stress protein A family.

Its subcellular location is the cytoplasm. In Staphylococcus saprophyticus subsp. saprophyticus (strain ATCC 15305 / DSM 20229 / NCIMB 8711 / NCTC 7292 / S-41), this protein is Putative universal stress protein SSP1056.